A 104-amino-acid polypeptide reads, in one-letter code: Iron-sulfur cluster assembly protein CyaY (104 aa).

The protein belongs to the frataxin family.

Its function is as follows. Involved in iron-sulfur (Fe-S) cluster assembly. May act as a regulator of Fe-S biogenesis. This chain is Iron-sulfur cluster assembly protein CyaY, found in Vibrio campbellii (strain ATCC BAA-1116).